The primary structure comprises 852 residues: DNA mismatch repair protein MutS (852 aa).

602 to 609 (GPNMSGKS) contacts ATP.

It belongs to the DNA mismatch repair MutS family.

This protein is involved in the repair of mismatches in DNA. It is possible that it carries out the mismatch recognition step. This protein has a weak ATPase activity. The sequence is that of DNA mismatch repair protein MutS from Streptococcus thermophilus (strain ATCC BAA-491 / LMD-9).